The following is a 120-amino-acid chain: Large ribosomal subunit protein uL18 (120 aa).

The protein belongs to the universal ribosomal protein uL18 family. In terms of assembly, part of the 50S ribosomal subunit; part of the 5S rRNA/L5/L18/L25 subcomplex. Contacts the 5S and 23S rRNAs.

This is one of the proteins that bind and probably mediate the attachment of the 5S RNA into the large ribosomal subunit, where it forms part of the central protuberance. This chain is Large ribosomal subunit protein uL18, found in Geobacillus kaustophilus (strain HTA426).